A 567-amino-acid polypeptide reads, in one-letter code: MELKAQATSILKEAILKVGFEVEDSELQFETSSHADLASRVAFRLASIHKQNPKELASRIVSAIEIPEGSYIGEVSAAGPYINFLAGRHYMDETVTAVREEKEKFGCGAPKDRILLEHTSANPNGPLHVGHIRNSIIGDTLARILRRAGYDVEVQYYVNDMGRQIAVVSWACERFELDLSRKSDAAIADVYIKANVELDKNPDYVKKIDALMEKVEVGDLQTIERFDKAVSLAIAGIKETLLRLNVVHDKFVNESRFLKSGEVHDIVERIKATGRTETDKGALVVDLSDYGFEKTLVIQRSNGTSLYTTRDLAYHEWKAGQADRIIDVFGADHKLISGQLRATLNAIGIKEPEVVIFEFVSLPEGSMSTRRGQFISADDLFDRVTEAAFEQVESRRPETSTEFKKQVAEMVGIGAVRYDIVRVSPEKSTVFNWKEALDFEKQGAPYIQYSHARACSILEKAKDEAAWDPAEEITPSLLVEDSEIDLIKKMAMFDSIIDLGARELKPHVLAIYARELADSFNQFYRFVPVIAAEDEKVRASRLALVDCARIVLANSLDTLGIGAPESM.

The 'HIGH' region motif lies at 121–131; sequence ANPNGPLHVGH.

The protein belongs to the class-I aminoacyl-tRNA synthetase family.

The protein localises to the cytoplasm. The catalysed reaction is tRNA(Arg) + L-arginine + ATP = L-arginyl-tRNA(Arg) + AMP + diphosphate. In Methanosarcina acetivorans (strain ATCC 35395 / DSM 2834 / JCM 12185 / C2A), this protein is Arginine--tRNA ligase.